Reading from the N-terminus, the 176-residue chain is Ribosome rescue factor SmrB (176 aa).

The region spanning 93 to 168 (LDLHGYRQSE…GDAALLVLID (76 aa)) is the Smr domain.

The protein belongs to the SmrB family. In terms of assembly, associates with collided ribosomes, but not with correctly translating polysomes.

Functionally, acts as a ribosome collision sensor. Detects stalled/collided disomes (pairs of ribosomes where the leading ribosome is stalled and a second ribosome has collided with it) and endonucleolytically cleaves mRNA at the 5' boundary of the stalled ribosome. Stalled/collided disomes form a new interface (primarily via the 30S subunits) that binds SmrB. Cleaved mRNA becomes available for tmRNA ligation, leading to ribosomal subunit dissociation and rescue of stalled ribosomes. This is Ribosome rescue factor SmrB from Shewanella sp. (strain ANA-3).